The following is a 239-amino-acid chain: uncharacterized protein (239 aa).

3 consecutive transmembrane segments (helical) span residues 125–144 (LAII…LILY), 149–171 (IFVL…FLFL), and 197–216 (SVLN…GILF).

The protein resides in the cell membrane. This is an uncharacterized protein from Aquifex aeolicus (strain VF5).